A 1029-amino-acid chain; its full sequence is Protein phosphatase 1 regulatory subunit 12A (1029 aa).

The KVKF motif signature appears at 35 to 38; sequence KVKF. 6 ANK repeats span residues 39–68, 72–101, 105–134, 138–164, 198–227, and 231–260; these read DDGA…DINY, DGLT…NINQ, EGWI…HVGA, EGDT…RQGV, SGGT…DVNI, and DGWT…DMET. (3S)-3-hydroxyasparagine; by HIF1AN is present on residues N67 and N100. A (3S)-3-hydroxyasparagine; by HIF1AN modification is found at N226. The disordered stretch occupies residues 290–786; that stretch reads LHSEKRDKKS…APSSSSLSTL (497 aa). Residues 291-300 are compositionally biased toward basic and acidic residues; the sequence is HSEKRDKKSP. S299 bears the Phosphoserine mark. Polar residues predominate over residues 302 to 314; it reads IESTANMENNQPQ. Over residues 318-353 the composition is skewed to basic and acidic residues; sequence KNKETLIIEPEKNASRIESLEHEKADEEEEGKKDES. Positions 357–369 are enriched in acidic residues; the sequence is SEEDEEDDSESEA. Low complexity predominate over residues 385–402; the sequence is TSSTQAAPAAVTAPTLSS. A phosphoserine mark is found at S422 and S432. Residues 422–432 are compositionally biased toward basic and acidic residues; sequence SPKEEERKDES. Phosphothreonine is present on T443. The residue at position 445 (S445) is a Phosphoserine; by NUAK1. Y446 carries the phosphotyrosine modification. Residues 469 to 480 are compositionally biased toward low complexity; sequence RSASSPRLSSSL. Position 472 is a phosphoserine; by NUAK1 (S472). Residue S473 is modified to Phosphoserine; by CDK1. S477 carries the post-translational modification Phosphoserine. The segment covering 481–491 has biased composition (basic and acidic residues); it reads DNKEKEKDNKG. Phosphoserine occurs at positions 507 and 509. Residues 540–551 show a composition bias toward polar residues; it reads NSSINEGSTYHR. Over residues 564 to 578 the composition is skewed to low complexity; it reads SCSVPSTTSTPTVTS. The segment covering 585 to 594 has biased composition (polar residues); that stretch reads SLPSSTSTAA. Residues 596–610 are compositionally biased toward low complexity; that stretch reads TPPGSSSAGTQSSTS. Phosphoserine occurs at positions 601 and 618. Over residues 614 to 625 the composition is skewed to basic and acidic residues; sequence WAEDSTEKEKDS. Residues 626-656 are compositionally biased toward low complexity; sequence APTAVTIPVAPTVVNAAAPSTTTLTTTTAGT. Positions 671–680 are enriched in basic and acidic residues; sequence VRDEESESQR. Positions 680–863 are interaction with ROCK2; that stretch reads RKARSRQARQ…VSFWTQDSDE (184 aa). Residues 681–691 are compositionally biased toward basic residues; sequence KARSRQARQSR. Residues S690 and S693 each carry the phosphoserine; by PKA and PKG; in vitro modification. Phosphothreonine; by ROCK1, ROCK2, CDC42BP, ZIPK/DAPK3 and RAF1 is present on T694. Residues 716-765 are compositionally biased toward basic and acidic residues; it reads RTREQENEEKEKEEKEKQDKEKQEEKKESEASREDEYKQKYSRTYDETYT. Over residues 771–786 the composition is skewed to low complexity; the sequence is STSSSSAPSSSSLSTL. The residue at position 801 (S801) is a Phosphoserine. The tract at residues 808–927 is disordered; sequence AYSRGLAKEN…PYSSRLEKDD (120 aa). A compositionally biased stretch (basic and acidic residues) spans 813-839; the sequence is LAKENEREGEKKEEEKEGEDKSQPKSI. Positions 840–851 are enriched in basic residues; that stretch reads RERRRPREKRRS. The residue at position 851 (S851) is a Phosphoserine; by ROCK2. S861 and S870 each carry phosphoserine. Over residues 866-882 the composition is skewed to basic and acidic residues; that stretch reads QERQSDTEDGSSKRETQ. A compositionally biased stretch (low complexity) spans 883-897; it reads TDSVSRYDSSSTSSS. Phosphoserine occurs at positions 902 and 907. S909 bears the Phosphoserine; by NUAK1 mark. Basic and acidic residues predominate over residues 913 to 927; the sequence is LEDRKPYSSRLEKDD. A Phosphoserine modification is found at S994.

In terms of assembly, PP1 comprises a catalytic subunit, PPP1CA, PPP1CB or PPP1CC, and one or several targeting or regulatory subunits. PPP1R12A mediates binding to myosin. Interacts with ARHA and CIT. Binds PPP1R12B, ROCK1 and IL16. Interacts directly with PRKG1. Non-covalent dimer of 2 dimers; PRKG1-PRKG1 and PPP1R12A-PPP1R12A. Interacts with SMTNL1. Interacts with PPP1CB; the interaction is direct. Interacts (when phosphorylated at Ser-445, Ser-472 and Ser-910) with 14-3-3. Interacts with ROCK1 and ROCK2. Interacts with isoform 1 and isoform 2 of ZIPK/DAPK3. Interacts with RAF1. Interacts with HIF1AN. Interacts with NCKAP1L. In terms of processing, phosphorylated by CIT (Rho-associated kinase). Phosphorylated cooperatively by ROCK1 and CDC42BP on Thr-694. Phosphorylated on upon DNA damage, probably by ATM or ATR. In vitro, phosphorylation of Ser-693 by PKA and PKG appears to prevent phosphorylation of the inhibitory site Thr-694, probably mediated by PRKG1. Phosphorylation at Ser-445, Ser-472 and Ser-909 by NUAK1 promotes interaction with 14-3-3, leading to inhibit interaction with myosin light chain MLC2, preventing dephosphorylation of MLC2. May be phosphorylated at Thr-694 by DMPK; may inhibit the myosin phosphatase activity. Phosphorylated at Ser-473 by CDK1 during mitosis, creating docking sites for the POLO box domains of PLK1. Subsequently, PLK1 binds and phosphorylates PPP1R12A. In terms of tissue distribution, expressed in striated and vascular smooth muscle, specificcally in type 2a fibers (at protein level). Expression levels are 20-30% higher in developed males than females (at protein level).

The protein localises to the cytoplasm. It is found in the cytoskeleton. The protein resides in the stress fiber. Its function is as follows. Key regulator of protein phosphatase 1C (PPP1C). Mediates binding to myosin. As part of the PPP1C complex, involved in dephosphorylation of PLK1. Capable of inhibiting HIF1AN-dependent suppression of HIF1A activity. This Mus musculus (Mouse) protein is Protein phosphatase 1 regulatory subunit 12A.